Consider the following 462-residue polypeptide: Argininosuccinate lyase (462 aa).

This sequence belongs to the lyase 1 family. Argininosuccinate lyase subfamily.

The protein resides in the cytoplasm. It carries out the reaction 2-(N(omega)-L-arginino)succinate = fumarate + L-arginine. The protein operates within amino-acid biosynthesis; L-arginine biosynthesis; L-arginine from L-ornithine and carbamoyl phosphate: step 3/3. This Chloroflexus aggregans (strain MD-66 / DSM 9485) protein is Argininosuccinate lyase.